Here is an 82-residue protein sequence, read N- to C-terminus: DNA-directed RNA polymerase subunit Rpo5 (82 aa).

Belongs to the archaeal Rpo5/eukaryotic RPB5 RNA polymerase subunit family. As to quaternary structure, part of the RNA polymerase complex.

The protein localises to the cytoplasm. The catalysed reaction is RNA(n) + a ribonucleoside 5'-triphosphate = RNA(n+1) + diphosphate. Functionally, DNA-dependent RNA polymerase (RNAP) catalyzes the transcription of DNA into RNA using the four ribonucleoside triphosphates as substrates. This Thermococcus celer protein is DNA-directed RNA polymerase subunit Rpo5.